Consider the following 258-residue polypeptide: MENCSSDAVVLHHFDYGEADRIVTLFSLEKGLIKGIARQARKSRKRFGAALEPFSTVHMRWQSRSGRDLVTLQDAELIDLRSGLRHNLLAMALAAYGCELVENLVGETGAQPPVYDLLTAFLTHVNHHGGSEEARLLLELRLLCLSGYAPHLVHCCKCGASFTSETVAFAASLGGSLCLDCVTGVDVQYLSLLSLGSLARALKAPLALFEGFRFGSQTLQQGGQVVSSMLRQQLTRPVKSLSFLSQLTEGSARVAAIR.

Belongs to the RecO family.

Involved in DNA repair and RecF pathway recombination. The polypeptide is DNA repair protein RecO (Syntrophotalea carbinolica (strain DSM 2380 / NBRC 103641 / GraBd1) (Pelobacter carbinolicus)).